The primary structure comprises 213 residues: Na(+)-translocating NADH-quinone reductase subunit D (213 aa).

Helical transmembrane passes span 21 to 41 (PLIA…VNTA), 42 to 62 (ITMG…VSLL), 69 to 86 (SVRM…VIVI), 101 to 121 (LSVF…AESL), 131 to 151 (FLDG…VSIV), and 183 to 203 (FGLM…IWGV).

This sequence belongs to the NqrDE/RnfAE family. Composed of six subunits; NqrA, NqrB, NqrC, NqrD, NqrE and NqrF.

The protein localises to the cell inner membrane. The enzyme catalyses a ubiquinone + n Na(+)(in) + NADH + H(+) = a ubiquinol + n Na(+)(out) + NAD(+). In terms of biological role, NQR complex catalyzes the reduction of ubiquinone-1 to ubiquinol by two successive reactions, coupled with the transport of Na(+) ions from the cytoplasm to the periplasm. NqrA to NqrE are probably involved in the second step, the conversion of ubisemiquinone to ubiquinol. The protein is Na(+)-translocating NADH-quinone reductase subunit D of Chlamydia caviae (strain ATCC VR-813 / DSM 19441 / 03DC25 / GPIC) (Chlamydophila caviae).